We begin with the raw amino-acid sequence, 677 residues long: MKVLGRSFFWVLFPVLPWAVQAVEHEEVAQRVIKLHRGRGVAAMQSRQWVRDSCRKLSGLLRQKNAVLNKLKTAIGAVEKDVGLSDEEKLFQVHTFEIFQKELNESENSVFQAVYGLQRALQGDYKDVVNMKESSRQRLEALREAAIKEETEYMELLAAEKHQVEALKNMQHQNQSLSMLDEILEDVRKAADRLEEEIEEHAFDDNKSVKGVNFEAVLRVEEEEANSKQNITKREVEDDLGLSMLIDSQNNQYILTKPRDSTIPRADHHFIKDIVTIGMLSLPCGWLCTAIGLPTMFGYIICGVLLGPSGLNSIKSIVQVETLGEFGVFFTLFLVGLEFSPEKLRKVWKISLQGPCYMTLLMIAFGLLWGHLLRIKPTQSVFISTCLSLSSTPLVSRFLMGSARGDKEGDIDYSTVLLGMLVTQDVQLGLFMAVMPTLIQAGASASSSIVVEVLRILVLIGQILFSLAAVFLLCLVIKKYLIGPYYRKLHMESKGNKEILILGISAFIFLMLTVTELLDVSMELGCFLAGALVSSQGPVVTEEIATSIEPIRDFLAIVFFASIGLHVFPTFVAYELTVLVFLTLSVVVMKFLLAALVLSLILPRSSQYIKWIVSAGLAQVSEFSFVLGSRARRAGVISREVYLLILSVTTLSLLLAPVLWRAAITRCVPRPERRSSL.

A signal peptide spans 1-22; it reads MKVLGRSFFWVLFPVLPWAVQA. Residues 124 to 204 are a coiled coil; sequence DYKDVVNMKE…EEEIEEHAFD (81 aa). Residues Asn206 and Asn230 are each glycosylated (N-linked (GlcNAc...) asparagine). The next 10 helical transmembrane spans lie at 286–306, 317–337, 350–370, 416–436, 456–476, 498–518, 554–574, 578–598, 608–628, and 640–660; these read WLCTAIGLPTMFGYIICGVLL, IVQVETLGEFGVFFTLFLVGL, ISLQGPCYMTLLMIAFGLLWG, VLLGMLVTQDVQLGLFMAVMP, ILVLIGQILFSLAAVFLLCLV, EILILGISAFIFLMLTVTELL, FLAIVFFASIGLHVFPTFVAY, VLVFLTLSVVVMKFLLAALVL, YIKWIVSAGLAQVSEFSFVLG, and EVYLLILSVTTLSLLLAPVLW.

Belongs to the monovalent cation:proton antiporter 2 (CPA2) transporter (TC 2.A.37) family. Expressed in the cornea, lens capsule and choroid-retinal pigment epithelium (at protein level).

It localises to the membrane. Functionally, probable Na(+)/H(+) antiporter. This chain is Transmembrane and coiled-coil domain-containing protein 3 (TMCO3), found in Homo sapiens (Human).